The primary structure comprises 493 residues: Galactose-1-phosphate uridylyltransferase 2 (493 aa).

The protein belongs to the galactose-1-phosphate uridylyltransferase type 2 family.

It localises to the cytoplasm. The catalysed reaction is alpha-D-galactose 1-phosphate + UDP-alpha-D-glucose = alpha-D-glucose 1-phosphate + UDP-alpha-D-galactose. Its pathway is carbohydrate metabolism; galactose metabolism. This is Galactose-1-phosphate uridylyltransferase 2 (galT2) from Streptococcus pneumoniae serotype 4 (strain ATCC BAA-334 / TIGR4).